A 39-amino-acid chain; its full sequence is Contryphan-Cal1 (39 aa).

The signal sequence occupies residues 1-20 (MTRTAVLLLTLLFLVAMAAS). A disulfide bridge connects residues Cys29 and Cys35.

Expressed by the venom duct.

It is found in the secreted. Its function is as follows. Probable neurotoxin. In Californiconus californicus (California cone), this protein is Contryphan-Cal1.